Reading from the N-terminus, the 416-residue chain is Adenylosuccinate synthetase (416 aa).

Residues 13–19 (GDEGKGK) and 41–43 (GHT) each bind GTP. Aspartate 14 functions as the Proton acceptor in the catalytic mechanism. Aspartate 14 and glycine 41 together coordinate Mg(2+). Residues 14 to 17 (DEGK), 39 to 42 (NAGH), threonine 126, arginine 140, glutamine 220, threonine 235, and arginine 299 contribute to the IMP site. Histidine 42 (proton donor) is an active-site residue. 295–301 (TTTGRKR) contributes to the substrate binding site. GTP-binding positions include arginine 301, 327–329 (KLD), and 405–407 (STS).

The protein belongs to the adenylosuccinate synthetase family. As to quaternary structure, homodimer. Mg(2+) is required as a cofactor.

The protein localises to the cytoplasm. It carries out the reaction IMP + L-aspartate + GTP = N(6)-(1,2-dicarboxyethyl)-AMP + GDP + phosphate + 2 H(+). It participates in purine metabolism; AMP biosynthesis via de novo pathway; AMP from IMP: step 1/2. In terms of biological role, plays an important role in the de novo pathway of purine nucleotide biosynthesis. Catalyzes the first committed step in the biosynthesis of AMP from IMP. The chain is Adenylosuccinate synthetase from Campylobacter hominis (strain ATCC BAA-381 / DSM 21671 / CCUG 45161 / LMG 19568 / NCTC 13146 / CH001A).